Reading from the N-terminus, the 274-residue chain is uncharacterized protein (274 aa).

The N-terminal stretch at 1-19 (MKRINKVLLSLLCLVIAYA) is a signal peptide.

This is an uncharacterized protein from Rickettsia prowazekii (strain Madrid E).